The sequence spans 495 residues: Guanosine-5'-triphosphate,3'-diphosphate pyrophosphatase (495 aa).

The protein belongs to the GppA/Ppx family. GppA subfamily.

It catalyses the reaction guanosine 3'-diphosphate 5'-triphosphate + H2O = guanosine 3',5'-bis(diphosphate) + phosphate + H(+). It participates in purine metabolism; ppGpp biosynthesis; ppGpp from GTP: step 2/2. In terms of biological role, catalyzes the conversion of pppGpp to ppGpp. Guanosine pentaphosphate (pppGpp) is a cytoplasmic signaling molecule which together with ppGpp controls the 'stringent response', an adaptive process that allows bacteria to respond to amino acid starvation, resulting in the coordinated regulation of numerous cellular activities. The polypeptide is Guanosine-5'-triphosphate,3'-diphosphate pyrophosphatase (Enterobacter sp. (strain 638)).